The chain runs to 257 residues: NAD-dependent protein deacylase (257 aa).

Residues 1–252 enclose the Deacetylase sirtuin-type domain; the sequence is MLGHAAKLLA…LRRVKDIMAE (252 aa). 20–39 is a binding site for NAD(+); that stretch reads GAGISAESGIPTFRGRNGLW. Residues Y64 and R67 each contribute to the substrate site. 98–101 is a binding site for NAD(+); it reads QNVD. H116 acts as the Proton acceptor in catalysis. C124, C127, C151, and C154 together coordinate Zn(2+). NAD(+) is bound by residues 191-193, 217-219, and A235; these read GTS and NVE.

Belongs to the sirtuin family. Class III subfamily. The cofactor is Zn(2+).

Its subcellular location is the cytoplasm. It catalyses the reaction N(6)-acetyl-L-lysyl-[protein] + NAD(+) + H2O = 2''-O-acetyl-ADP-D-ribose + nicotinamide + L-lysyl-[protein]. The enzyme catalyses N(6)-succinyl-L-lysyl-[protein] + NAD(+) + H2O = 2''-O-succinyl-ADP-D-ribose + nicotinamide + L-lysyl-[protein]. NAD-dependent lysine deacetylase and desuccinylase that specifically removes acetyl and succinyl groups on target proteins. Modulates the activities of several proteins which are inactive in their acylated form. Deacetylates the N-terminal lysine residue of Alba, the major archaeal chromatin protein and that, in turn, increases Alba's DNA binding affinity, thereby repressing transcription. In Thermococcus kodakarensis (strain ATCC BAA-918 / JCM 12380 / KOD1) (Pyrococcus kodakaraensis (strain KOD1)), this protein is NAD-dependent protein deacylase.